The chain runs to 476 residues: Ribosomal protein uS12 methylthiotransferase RimO (476 aa).

Positions 7 to 123 constitute an MTTase N-terminal domain; the sequence is KSLYMMTLGC…IGDLLAAEAS (117 aa). Positions 16, 52, 86, 158, 162, and 165 each coordinate [4Fe-4S] cluster. The region spanning 144–373 is the Radical SAM core domain; the sequence is SMPKYTAYLK…MAIQKRINRE (230 aa). The region spanning 376–444 is the TRAM domain; that stretch reads KKLVGKRLEV…DYDLVARVVE (69 aa). Over residues 445 to 459 the composition is skewed to basic and acidic residues; sequence RPDPKQREHTARDAH. The segment at 445–476 is disordered; the sequence is RPDPKQREHTARDAHPAPLPVAAMQRPAPRAE.

It belongs to the methylthiotransferase family. RimO subfamily. [4Fe-4S] cluster is required as a cofactor.

The protein resides in the cytoplasm. It carries out the reaction L-aspartate(89)-[ribosomal protein uS12]-hydrogen + (sulfur carrier)-SH + AH2 + 2 S-adenosyl-L-methionine = 3-methylsulfanyl-L-aspartate(89)-[ribosomal protein uS12]-hydrogen + (sulfur carrier)-H + 5'-deoxyadenosine + L-methionine + A + S-adenosyl-L-homocysteine + 2 H(+). Its function is as follows. Catalyzes the methylthiolation of an aspartic acid residue of ribosomal protein uS12. This chain is Ribosomal protein uS12 methylthiotransferase RimO, found in Myxococcus xanthus (strain DK1622).